The following is an 853-amino-acid chain: MRIAKLILNTLLTLCILGLVAGGMLYFHLKSELQQPMQIYTADGKLIGEVGEQRRIPVKLADVPQRLIDAFLATEDSRFYDHHGLDPIGIARALFVAVSNGGASQGASTITQQLARNFFLTSEKTIIRKAREAVLAVEIENTLNKQEILELYLNKIFLGYRSYGVAAAAQTYFGKSLNELTLSEMAIIAGLPKAPSTMNPLYSLKRSEERRNVVLSRMLDEKYISKEEYDAALKEPIVASYHGAKFEFRADYVTEMVRQEMVRRFGEENAYTSGYKVFTTVLSKDQAEAQKAVRNNLIDYDMRHGYRGGAPLWQKNEAAWDNDRIVGFLRKLPDSEPFIPAAVIGIVKGGADILLASGEKMTLSTNAMRWTGRSNPVKVGEQIWIHQRANGEWQLGQIPAANSALVSLNSDNGAIEAVVGGFSYEQSKFNRATQSLVQVGSSIKPFIYAAALEKGLTLSSVLQDSPISIQKPGQKMWQPKNSPDRYDGPMRLRVGLGQSKNIIAIRAIQTAGIDFTAEFLQRFGFKRDQYFASEALALGAASFTPLEMARAYAVFDNGGFLIEPYIIEKIQDNTGKDLFIANPKIACIECNDIPVIYGETKDKINGFANIPLGENALKPTDDSTNGEELDQQPETVPELPELQSNMTALKEDAIDLMAAAKNASSKIEYAPRVISGELAFLIRSALNTAIYGEQGLDWKGTSWRIAQSIKRSDIGGKTGTTNSSKVAWYAGFGANLVTTTYVGFDDNKRVLGRGEAGAKTAMPAWITYMKTALSDKPERKLSLPPKIVEKNIDTLTGLLSPNGGRKEYFIAGTEPTRTYLSEMQERGYYVPTELQQRLNNEGNTPATQPQELF.

The Cytoplasmic segment spans residues 1-6; that stretch reads MRIAKL. Residues 7 to 27 form a helical; Signal-anchor for type II membrane protein membrane-spanning segment; sequence ILNTLLTLCILGLVAGGMLYF. At 28–853 the chain is on the periplasmic side; the sequence is HLKSELQQPM…TPATQPQELF (826 aa). The interval 37–205 is transglycosylase; that stretch reads MQIYTADGKL…STMNPLYSLK (169 aa). Catalysis depends on E75, which acts as the Proton donor; for transglycosylase activity. The transpeptidase stretch occupies residues 387-681; it reads QRANGEWQLG…RVISGELAFL (295 aa). Catalysis depends on S441, which acts as the Acyl-ester intermediate; for transpeptidase activity. The disordered stretch occupies residues 615–636; it reads NALKPTDDSTNGEELDQQPETV.

The protein in the N-terminal section; belongs to the glycosyltransferase 51 family. This sequence in the C-terminal section; belongs to the transpeptidase family.

It localises to the cell inner membrane. The enzyme catalyses [GlcNAc-(1-&gt;4)-Mur2Ac(oyl-L-Ala-gamma-D-Glu-L-Lys-D-Ala-D-Ala)](n)-di-trans,octa-cis-undecaprenyl diphosphate + beta-D-GlcNAc-(1-&gt;4)-Mur2Ac(oyl-L-Ala-gamma-D-Glu-L-Lys-D-Ala-D-Ala)-di-trans,octa-cis-undecaprenyl diphosphate = [GlcNAc-(1-&gt;4)-Mur2Ac(oyl-L-Ala-gamma-D-Glu-L-Lys-D-Ala-D-Ala)](n+1)-di-trans,octa-cis-undecaprenyl diphosphate + di-trans,octa-cis-undecaprenyl diphosphate + H(+). The catalysed reaction is Preferential cleavage: (Ac)2-L-Lys-D-Ala-|-D-Ala. Also transpeptidation of peptidyl-alanyl moieties that are N-acyl substituents of D-alanine.. It participates in cell wall biogenesis; peptidoglycan biosynthesis. Its function is as follows. Cell wall formation. Synthesis of cross-linked peptidoglycan from the lipid intermediates. The enzyme has a penicillin-insensitive transglycosylase N-terminal domain (formation of linear glycan strands) and a penicillin-sensitive transpeptidase C-terminal domain (cross-linking of the peptide subunits). This chain is Penicillin-binding protein 1A (mrcA), found in Haemophilus influenzae (strain ATCC 51907 / DSM 11121 / KW20 / Rd).